An 886-amino-acid chain; its full sequence is Probable mixed-linked glucan synthase 8 (886 aa).

The next 2 helical transmembrane spans lie at 87-107 (ILLH…VLFF) and 118-138 (GMFF…SWLL). D213 is a catalytic residue. D413 and D415 together coordinate substrate. D577 is a catalytic residue. 6 helical membrane passes run 659–679 (VFLL…IFYI), 683–703 (FPTY…IGMV), 723–743 (IIGA…KCFG), 775–795 (LLFP…AAIG), 812–832 (LGLV…LGIM), and 840–860 (YILF…DIAI).

This sequence belongs to the glycosyltransferase 2 family. Plant cellulose synthase-like F subfamily.

It localises to the golgi apparatus membrane. Its function is as follows. May catalyze both beta-1,3 and beta-1,4 glycosidic linkage on beta-D-glucan. Essential for (1,3;1,4)-beta-D-glucans synthesis in grasses and cereals (Poaceae). The mixed-linked glucans (which are not present in walls of dicotyledons or most other monocotyledonous plants) are particularly important constituents of the walls of the starchy endosperm and aleurone cells of cereal grains such as oats, wheat, rice and barley. They can account for up to 70% by weight of the wall. This is Probable mixed-linked glucan synthase 8 (CSFL8) from Oryza sativa subsp. japonica (Rice).